We begin with the raw amino-acid sequence, 58 residues long: Small ribosomal subunit protein bS21 (58 aa).

The tract at residues 39–58 is disordered; it reads DKPSVKKRAKSKAAAKYRSR. A compositionally biased stretch (basic residues) spans 43 to 58; that stretch reads VKKRAKSKAAAKYRSR.

Belongs to the bacterial ribosomal protein bS21 family.

In Chlamydia abortus (strain DSM 27085 / S26/3) (Chlamydophila abortus), this protein is Small ribosomal subunit protein bS21.